The chain runs to 274 residues: uncharacterized protein (274 aa).

This sequence belongs to the type II cytokine receptor family.

This is an uncharacterized protein from Sus scrofa (Pig).